Here is a 317-residue protein sequence, read N- to C-terminus: Protoheme IX farnesyltransferase (317 aa).

Transmembrane regions (helical) follow at residues 39-58 (VMSL…PGSL), 62-84 (LGAI…NMWY), 100-120 (IPAG…LAVG), 123-143 (LVMW…AIFF), 160-180 (IVIG…AVTG), 184-204 (LMPV…FWSL), 233-253 (IMAY…LGDT), 256-276 (VYGL…WRVL), and 293-313 (ARAA…ALAV).

It belongs to the UbiA prenyltransferase family. Protoheme IX farnesyltransferase subfamily.

It is found in the cell inner membrane. The catalysed reaction is heme b + (2E,6E)-farnesyl diphosphate + H2O = Fe(II)-heme o + diphosphate. Its pathway is porphyrin-containing compound metabolism; heme O biosynthesis; heme O from protoheme: step 1/1. Functionally, converts heme B (protoheme IX) to heme O by substitution of the vinyl group on carbon 2 of heme B porphyrin ring with a hydroxyethyl farnesyl side group. This is Protoheme IX farnesyltransferase from Granulibacter bethesdensis (strain ATCC BAA-1260 / CGDNIH1).